An 86-amino-acid chain; its full sequence is RNA-binding protein Hfq (86 aa).

Residues 12-73 (DIFLNQVRKE…ISTISPQKPV (62 aa)) form the Sm domain.

It belongs to the Hfq family. In terms of assembly, homohexamer.

Functionally, RNA chaperone that binds small regulatory RNA (sRNAs) and mRNAs to facilitate mRNA translational regulation in response to envelope stress, environmental stress and changes in metabolite concentrations. Also binds with high specificity to tRNAs. This chain is RNA-binding protein Hfq, found in Caldanaerobacter subterraneus subsp. tengcongensis (strain DSM 15242 / JCM 11007 / NBRC 100824 / MB4) (Thermoanaerobacter tengcongensis).